The sequence spans 263 residues: Palmitoyltransferase ZDHHC22 (263 aa).

Topologically, residues 1 to 9 (MLALRLLNV) are cytoplasmic. The chain crosses the membrane as a helical span at residues 10-30 (VAPAYFLCISLVTFVLQLFLF). Residues 31-48 (LPSMREDPAAARLFSPAL) lie on the Lumenal side of the membrane. The helical transmembrane segment at 49-69 (LHGALFLFLSANALGNYVLVI) threads the bilayer. Topologically, residues 70–125 (QNSPDDLGACQGASARKTPCPSPSTHFCRVCARVTLRHDHHCFFTGNCIGSRNMRN) are cytoplasmic. Residues 92–131 (PSTHFCRVCARVTLRHDHHCFFTGNCIGSRNMRNFVLFCL) form the DHHC domain. Cys111 acts as the S-palmitoyl cysteine intermediate in catalysis. Transmembrane regions (helical) follow at residues 126 to 146 (FVLF…AGVA) and 147 to 167 (YISA…TLLP). Over 168–182 (TSISQFFSGAVLGSE) the chain is Cytoplasmic. The chain crosses the membrane as a helical span at residues 183 to 203 (MFVILMLYLWFAIGLACAGFC). Over 204-263 (CHQLLLILRGQTRHQVRKGVAVRARPWRKNLQEVFGKRWLLGLLVPMFNVGSESSKQQDK) the chain is Lumenal.

It belongs to the DHHC palmitoyltransferase family. In terms of assembly, interacts with CNN3. In terms of tissue distribution, widely expressed.

It localises to the endoplasmic reticulum membrane. It is found in the golgi apparatus membrane. The enzyme catalyses L-cysteinyl-[protein] + hexadecanoyl-CoA = S-hexadecanoyl-L-cysteinyl-[protein] + CoA. In terms of biological role, palmitoyltransferase that could catalyze the addition of palmitate onto various protein substrates and be involved in a variety of cellular processes. Catalyzes the palmitoylation of KCNMA1, regulating localization of KCNMA1 to the plasma membrane. Might also mediate palmitoylation of CNN3. The chain is Palmitoyltransferase ZDHHC22 from Homo sapiens (Human).